A 398-amino-acid polypeptide reads, in one-letter code: MNEQGLSEREIFSYLENAKSEDTDYYRVFSSMCTRPHKIAIEANRLFIEANLGDLGLFAGAHKLEQEVVRMLGNLLHASSIDVPSGGLCQSSVCGYLTTGGTESNIQAVRGMKNLVTAGKKEFKGTPNIVIPASAHFSFDKVADMMGIEVRRASLDSEFRVDMASVEKLINENTIGLVGIAGNTEFGQIDPIDKLSEVALENELFLHVDAAFGGFVIPFLEKPQPFDFKVPGVTSIAIDPHKMGLSTIPSGALLFRSPSFLDSLKVSTPYLTTKSQFTLTGTRSGASAAATCAVMKYLGYEGYRKNVQYCMELTSKIVEEARKLGFEPLIEPVMNVVALKVPNPDLVRERLLKKFGWNVSITRTPRALRLVLMPHNSPEDIELFLEDLKKVTAEIKSP.

Residue K242 is modified to N6-(pyridoxal phosphate)lysine.

This sequence belongs to the group II decarboxylase family. MfnA subfamily. Pyridoxal 5'-phosphate serves as cofactor.

It carries out the reaction L-tyrosine + H(+) = tyramine + CO2. The catalysed reaction is L-aspartate + H(+) = beta-alanine + CO2. It participates in cofactor biosynthesis; methanofuran biosynthesis. Its pathway is cofactor biosynthesis; coenzyme A biosynthesis. Functionally, catalyzes the decarboxylation of L-tyrosine to produce tyramine for methanofuran biosynthesis. Can also catalyze the decarboxylation of L-aspartate to produce beta-alanine for coenzyme A (CoA) biosynthesis. In Methanosarcina mazei (strain ATCC BAA-159 / DSM 3647 / Goe1 / Go1 / JCM 11833 / OCM 88) (Methanosarcina frisia), this protein is Probable L-tyrosine/L-aspartate decarboxylase.